A 556-amino-acid polypeptide reads, in one-letter code: Formate--tetrahydrofolate ligase (556 aa).

65–72 (TSAGEGKT) provides a ligand contact to ATP.

This sequence belongs to the formate--tetrahydrofolate ligase family.

It catalyses the reaction (6S)-5,6,7,8-tetrahydrofolate + formate + ATP = (6R)-10-formyltetrahydrofolate + ADP + phosphate. The protein operates within one-carbon metabolism; tetrahydrofolate interconversion. The polypeptide is Formate--tetrahydrofolate ligase (Kosmotoga olearia (strain ATCC BAA-1733 / DSM 21960 / TBF 19.5.1)).